The primary structure comprises 862 residues: DNA mismatch repair protein MutS (862 aa).

608 to 615 (GPNMAGKS) lines the ATP pocket.

Belongs to the DNA mismatch repair MutS family.

Its function is as follows. This protein is involved in the repair of mismatches in DNA. It is possible that it carries out the mismatch recognition step. This protein has a weak ATPase activity. The chain is DNA mismatch repair protein MutS from Borrelia garinii subsp. bavariensis (strain ATCC BAA-2496 / DSM 23469 / PBi) (Borreliella bavariensis).